A 117-amino-acid chain; its full sequence is Hainantoxin-XV-2 (117 aa).

The first 20 residues, M1 to S20, serve as a signal peptide directing secretion. The segment at S20–E55 is disordered. A propeptide spanning residues S21 to R56 is cleaved from the precursor. Residues N23–E55 show a composition bias toward basic and acidic residues. 4 cysteine pairs are disulfide-bonded: C58/C72, C65/C78, C69/C115, and C71/C91.

It belongs to the neurotoxin 03 (Tx2) family. 02 subfamily. HNTX-XV sub-subfamily. As to expression, expressed by the venom gland.

Its subcellular location is the secreted. Its function is as follows. Putative ion channel inhibitor. This chain is Hainantoxin-XV-2, found in Cyriopagopus hainanus (Chinese bird spider).